The chain runs to 229 residues: UPF0758 protein Mbur_0382 (229 aa).

Positions 106–228 constitute an MPN domain; sequence KIRSANDVYS…YVSLKEEGYI (123 aa). Residues H177, H179, and D190 each contribute to the Zn(2+) site. The short motif at 177–190 is the JAMM motif element; that stretch reads HNHPSGDPAPSRED.

The protein belongs to the UPF0758 family.

In Methanococcoides burtonii (strain DSM 6242 / NBRC 107633 / OCM 468 / ACE-M), this protein is UPF0758 protein Mbur_0382.